The following is a 639-amino-acid chain: Kininogen-1 (639 aa).

Positions 1 to 18 (MKLITILLLCSRLLPSLA) are cleaved as a signal peptide. In terms of domain architecture, Cystatin kininogen-type 1 spans 28-132 (CNDESLFQAV…TQICNITPGK (105 aa)). Cystine bridges form between Cys-28–Cys-609, Cys-83–Cys-94, Cys-107–Cys-126, Cys-142–Cys-145, Cys-206–Cys-218, Cys-229–Cys-248, Cys-264–Cys-267, Cys-328–Cys-340, and Cys-351–Cys-370. Asn-82 carries an N-linked (GlcNAc...) asparagine glycan. The Cystatin kininogen-type 2 domain maps to 151–254 (VDSPELGPVL…SDSCEFYPGD (104 aa)). 2 N-linked (GlcNAc...) asparagine glycosylation sites follow: Asn-169 and Asn-205. The region spanning 273–376 (VDSPELKEAL…TVKCKVLDMT (104 aa)) is the Cystatin kininogen-type 3 domain. Asn-294 carries an N-linked (GlcNAc...) asparagine glycan. Position 332 is a phosphoserine (Ser-332). Disordered stretches follow at residues 438–462 (NHQG…GHGH) and 476–547 (GYDH…LNPP). A compositionally biased stretch (basic residues) spans 482-502 (PVGHGHGQRHGHGHGHGHGRD). The span at 503-519 (KHTNKDKNNVKHTDQRR) shows a compositional bias: basic and acidic residues. The segment covering 522 to 537 (LTSSSEDNTTSTQIQG) has biased composition (polar residues). N-linked (GlcNAc...) asparagine glycosylation occurs at Asn-529.

Bradykinin is released from kininogen by plasma kallikrein. In terms of processing, phosphorylated by FAM20C in the extracellular medium. Post-translationally, bradykinin is inactivated by ACE, which removes the dipeptide Arg-Phe from its C-terminus. In terms of tissue distribution, plasma.

The protein resides in the secreted. The protein localises to the extracellular space. Functionally, kininogens are inhibitors of thiol proteases. HMW-kininogen plays an important role in blood coagulation by helping to position optimally prekallikrein and factor XI next to factor XII; HMW-kininogen inhibits the thrombin- and plasmin-induced aggregation of thrombocytes. LMW-kininogen inhibits the aggregation of thrombocytes. LMW-kininogen is in contrast to HMW-kininogen not involved in blood clotting. Its function is as follows. The active peptide bradykinin is a potent vasodilatator that is released from HMW-kininogen shows a variety of physiological effects: (A) influence in smooth muscle contraction, (B) induction of hypotension, (C) natriuresis and diuresis, (D) decrease in blood glucose level, (E) it is a mediator of inflammation and causes (E1) increase in vascular permeability, (E2) stimulation of nociceptors (4E3) release of other mediators of inflammation (e.g. prostaglandins), (F) it has a cardioprotective effect (directly via bradykinin action, indirectly via endothelium-derived relaxing factor action). The protein is Kininogen-1 (Kng1) of Rattus norvegicus (Rat).